Here is a 324-residue protein sequence, read N- to C-terminus: NADH-ubiquinone oxidoreductase chain 1 (324 aa).

The next 8 helical transmembrane spans lie at 9 to 29, 75 to 95, 106 to 126, 146 to 166, 177 to 197, 237 to 257, 259 to 279, and 299 to 319; these read VLNPLAYIVPVLLAVAFLTLL, FLFLATPMLALTLALTLWAPM, LGVLFVLALSSLAVYSILGSG, ISYEVSLGLILLSVIIFTGGF, SIWLVVPAWPLAALWYISTLA, ILLMNTLSAILFLGATHIPAL, ELTAMNLMTKAALLSVVFLWV, and FLPMTLALVLWHLALPIALAG.

It belongs to the complex I subunit 1 family.

It is found in the mitochondrion inner membrane. The enzyme catalyses a ubiquinone + NADH + 5 H(+)(in) = a ubiquinol + NAD(+) + 4 H(+)(out). In terms of biological role, core subunit of the mitochondrial membrane respiratory chain NADH dehydrogenase (Complex I) that is believed to belong to the minimal assembly required for catalysis. Complex I functions in the transfer of electrons from NADH to the respiratory chain. The immediate electron acceptor for the enzyme is believed to be ubiquinone. This is NADH-ubiquinone oxidoreductase chain 1 (MT-ND1) from Thymallus arcticus (Arctic grayling).